We begin with the raw amino-acid sequence, 92 residues long: Small ribosomal subunit protein uS19 (92 aa).

It belongs to the universal ribosomal protein uS19 family.

Functionally, protein S19 forms a complex with S13 that binds strongly to the 16S ribosomal RNA. The polypeptide is Small ribosomal subunit protein uS19 (Pelobacter propionicus (strain DSM 2379 / NBRC 103807 / OttBd1)).